The sequence spans 466 residues: NADH-quinone oxidoreductase subunit N (466 aa).

14 helical membrane-spanning segments follow: residues 9–29, 33–53, 68–88, 100–120, 122–142, 157–177, 190–210, 232–252, 263–283, 289–309, 314–334, 359–379, 394–416, and 438–458; these read LIPLLILACGSVFVLMLGAIV, CGTVIGVAVCAGTALWAMLAP, PFTRFFLVFFAVTAGLSLLLA, EEYPATILFGTFGMGVVASAA, FLTLFLGLEALTFAFYILVAY, LLMGAVSAAFVAFGIALLYGA, SAAGGGIALAGWGLLLAGLAF, VVAFLASGSKGAAIALFLLIL, APLWGLAFLSMTVGNLAALLQ, MLAYSSVAQMGYVALALLSGG, AAAFYAVAYGAMVLAAFGALA, GVVLAVAMLALAGIPPTVGFV, APLAVIGILTAAASAYYYLRVVV, and LSLGIAALAIFILGIWPGPLF.

The protein belongs to the complex I subunit 2 family. NDH-1 is composed of 14 different subunits. Subunits NuoA, H, J, K, L, M, N constitute the membrane sector of the complex.

The protein resides in the cell inner membrane. It carries out the reaction a quinone + NADH + 5 H(+)(in) = a quinol + NAD(+) + 4 H(+)(out). NDH-1 shuttles electrons from NADH, via FMN and iron-sulfur (Fe-S) centers, to quinones in the respiratory chain. The immediate electron acceptor for the enzyme in this species is believed to be ubiquinone. Couples the redox reaction to proton translocation (for every two electrons transferred, four hydrogen ions are translocated across the cytoplasmic membrane), and thus conserves the redox energy in a proton gradient. This is NADH-quinone oxidoreductase subunit N from Geobacter metallireducens (strain ATCC 53774 / DSM 7210 / GS-15).